Here is a 159-residue protein sequence, read N- to C-terminus: uncharacterized protein (159 aa).

In terms of domain architecture, N-acetyltransferase spans Ile4 to Cys153.

Belongs to the acetyltransferase family.

This is an uncharacterized protein from Escherichia coli (strain K12).